The sequence spans 219 residues: Charged multivesicular body protein 5 (219 aa).

Residues 22–153 are a coiled coil; the sequence is TNVDGRAESI…EIQEALSRSY (132 aa).

It belongs to the SNF7 family. In terms of assembly, probable peripherally associated component of the endosomal sorting required for transport complex III (ESCRT-III).

The protein localises to the cytoplasm. Its subcellular location is the cytosol. The protein resides in the endosome membrane. Probable peripherally associated component of the endosomal sorting required for transport complex III (ESCRT-III) which is involved in multivesicular bodies (MVBs) formation and sorting of endosomal cargo proteins into MVBs. MVBs contain intraluminal vesicles (ILVs) that are generated by invagination and scission from the limiting membrane of the endosome and mostly are delivered to lysosomes enabling degradation of membrane proteins, such as stimulated growth factor receptors, lysosomal enzymes and lipids. This is Charged multivesicular body protein 5 (chmp5) from Xenopus laevis (African clawed frog).